A 234-amino-acid polypeptide reads, in one-letter code: Large ribosomal subunit protein uL1 (234 aa).

This sequence belongs to the universal ribosomal protein uL1 family. Part of the 50S ribosomal subunit.

Its function is as follows. Binds directly to 23S rRNA. The L1 stalk is quite mobile in the ribosome, and is involved in E site tRNA release. Protein L1 is also a translational repressor protein, it controls the translation of the L11 operon by binding to its mRNA. This chain is Large ribosomal subunit protein uL1, found in Anaeromyxobacter dehalogenans (strain 2CP-1 / ATCC BAA-258).